The sequence spans 160 residues: Cytochrome b6-f complex subunit 4 (160 aa).

Transmembrane regions (helical) follow at residues Leu36–Val56, Leu95–Glu115, and Thr131–Ile151.

Belongs to the cytochrome b family. PetD subfamily. The 4 large subunits of the cytochrome b6-f complex are cytochrome b6, subunit IV (17 kDa polypeptide, petD), cytochrome f and the Rieske protein, while the 4 small subunits are petG, petL, petM and petN. The complex functions as a dimer.

It localises to the plastid. The protein localises to the chloroplast thylakoid membrane. In terms of biological role, component of the cytochrome b6-f complex, which mediates electron transfer between photosystem II (PSII) and photosystem I (PSI), cyclic electron flow around PSI, and state transitions. This is Cytochrome b6-f complex subunit 4 from Arabidopsis thaliana (Mouse-ear cress).